Consider the following 37-residue polypeptide: Mu-thomitoxin-Hme1a (37 aa).

Intrachain disulfides connect Cys-2-Cys-18, Cys-9-Cys-22, and Cys-17-Cys-33. A Phenylalanine amide modification is found at Phe-37.

It belongs to the neurotoxin 01 (U2-agtx) family. Contains 3 disulfide bonds. In terms of tissue distribution, expressed by the venom gland.

Its subcellular location is the secreted. In terms of biological role, blocks the Nav1.2/SCN2A, Nav1.4/SCN4A, and Nav1.6/SCN8A sodium channels. Reduces the peak amplitude of the sodium current and negatively shifts the steady-state inactivation process. Does not shift the threshold potential of activation or the voltage corresponding to maximal current. Does not change the reversal potential of the sodium current. May act on site 1 of the receptor. This chain is Mu-thomitoxin-Hme1a, found in Heriaeus mellotteei (Crab spider).